The sequence spans 1325 residues: Nucleoporin nup146 (1325 aa).

Disordered regions lie at residues 1–20 (MNAE…AGGS), 453–474 (VRAS…FVKN), 758–951 (GEGL…PKIH), and 973–994 (FPKQ…QESL). Residues 763-778 (QQKTSKALPSTGITKL) show a composition bias toward polar residues. A compositionally biased stretch (basic and acidic residues) spans 779–791 (SENDNEKAEESNE). Residues 792–801 (TKGFNTTIAK) are compositionally biased toward polar residues. Residues 802 to 811 (QNDKSSKSEG) show a composition bias toward basic and acidic residues. 2 stretches are compositionally biased toward polar residues: residues 816–835 (ANMS…SKPS) and 850–861 (FTFNKPSETPPF). Positions 867-881 (LVEKESKQDVSDTSD) are enriched in basic and acidic residues. Position 899 is a phosphothreonine (Thr899). Over residues 927–937 (SEIEDQDEESS) the composition is skewed to acidic residues. Position 946 is a phosphothreonine (Thr946). A phosphoserine mark is found at Ser1041, Ser1043, and Ser1044.

It is found in the cytoplasm. Its subcellular location is the nucleus. Functions as a component of the nuclear pore complex (NPC). NPC components, collectively referred to as nucleoporins (NUPs), can play the role of both NPC structural components and of docking or interaction partners for transiently associated nuclear transport factors. Active directional transport is assured by both, a Phe-Gly (FG) repeat affinity gradient for these transport factors across the NPC and a transport cofactor concentration gradient across the nuclear envelope. The sequence is that of Nucleoporin nup146 (nup146) from Schizosaccharomyces pombe (strain 972 / ATCC 24843) (Fission yeast).